The primary structure comprises 1148 residues: MGELSPVCLCLLLQGLLLCNTGAARNLNELKMECPHTIRLGQGLVVGSVELPSLPIQQVETLKLESSCNFDLHTSTAGQQSFTKWTWEIKGDLAENTQASSTSFQTKSSEVNLRGLCLIPTLVVETAARMRKTIACYDLSCNQTVCQPTVYLMGPIQTCITTKSCLLSLGDQRIQVNYEKTYCVSGQLVEGICFNPIHTMALSQPSHTYDIMTMMVRCFLVIKKVTSGDSMKIEKNFETLVQKNGCTANNFQGYYICLIGSSSEPLYVPALDDYRSAEVLSRMAFAPHGEDHDIEKNAVSAMRIAGKVTGKAPSTESSDTVQGIAFSGSPLYTSTGVLTSKDDPVYIWAPGIIMEGNHSICEKKTLPLTWTGFISLPGEIEKTTQCTVFCTLAGPGADCEAYSETGIFNISSPTCLINRVQRFRGSEQQIKFVCQRVDMDITVYCNGMKKVILTKTLVIGQCIYTFTSIFSLIPGVAHSLAVELCVPGLHGWATMLLLLTFCFGWVLIPTITMILLKILIAFAYLCSKYNTDSKFRILIEKVKREYQKTMGSMVCEVCQYECETAKELESHRKSCSIGSCPYCLNPSEATTSALQAHFKVCKLTSRFQENLRKSLTVYEPMQGCYRTLSLFRYRSRFFVGLVWCVLLVLELIVWAASAETQNLNAGWTDTAHGSGIIPMKTDLELDFSLPSSASYTYRRQLQNPANEQEKIPFHLQLSKQVIHAEIQHLGHWMDATFNLKTAFHCYGSCEKYAYPWQTAGCFIEKDYEYETGWGCNPPDCPGVGTGCTACGVYLDKLKSVGKVFKIVSLRYTRKVCIQLGTEQTCKTVDSNDCLITTSVKVCLIGTISKFQPSDTLLFLGPLQQGGLIFKQWCTTTCQFGDPGDIMSTPTGMKCPELNGSFRKKCAFATTPVCQFDGNTISGYKRMIATKDSFQSFNVTEPHISTSALEWIDPDSSLRDHINVIVSRDLSFQDLSETPCQIDLATASIDGAWGSGVGFNLVCTVSLTECSAFLTSIKACDAAMCYGSTTANLVRGQNTIHIVGKGGHSGSKFMCCHDTKCSSTGLVAAAPHLDRVTGYNQADSDKIFDDGAPECGMSCWFKKSGEWILGVLNGNWMVVAVLVVLLILSILLFTLCCPRRPSYRKEHKP.

The first 23 residues, 1–23 (MGELSPVCLCLLLQGLLLCNTGA), serve as a signal peptide directing secretion. Over 24–496 (ARNLNELKME…PGLHGWATML (473 aa)) the chain is Lumenal. Intrachain disulfides connect Cys34/Cys159, Cys68/Cys165, Cys117/Cys136, Cys141/Cys146, Cys183/Cys193, and Cys218/Cys257. Residue Asn142 is glycosylated (N-linked (GlcNAc...) asparagine; by host). A glycan (N-linked (GlcNAc...) asparagine; by host) is linked at Asn357. Cystine bridges form between Cys386–Cys445, Cys390–Cys399, Cys415–Cys434, and Cys462–Cys485. Residue Asn409 is glycosylated (N-linked (GlcNAc...) asparagine; by host). Residues 497–517 (LLLTFCFGWVLIPTITMILLK) form a helical membrane-spanning segment. The Cytoplasmic portion of the chain corresponds to 518 to 637 (ILIAFAYLCS…LSLFRYRSRF (120 aa)). A binding to the ribonucleoprotein region spans residues 526 to 543 (CSKYNTDSKFRILIEKVK). 2 CCHC-type zinc fingers span residues 555-575 (CEVC…RKSC) and 580-601 (CPYC…FKVC). Binding to the ribonucleoprotein stretches follow at residues 598–615 (FKVC…RKSL), 602–613 (KLTSRFQENLRK), and 621–635 (MQGC…RYRS). Residues 621–644 (MQGCYRTLSLFRYRSRFFVGLVWC) form the ITAM domain. The YxxL motif lies at 625–628 (YRTL). Residues 638 to 658 (FVGLVWCVLLVLELIVWAASA) traverse the membrane as a helical segment. Topologically, residues 659-1115 (ETQNLNAGWT…WILGVLNGNW (457 aa)) are lumenal. 8 cysteine pairs are disulfide-bonded: Cys745-Cys780, Cys749-Cys787, Cys761-Cys894, Cys775-Cys905, Cys790-Cys913, Cys816-Cys825, Cys833-Cys842, and Cys873-Cys877. Residues 767-787 (YEYETGWGCNPPDCPGVGTGC) form a fusion loop region. The N-linked (GlcNAc...) asparagine; by host glycan is linked to Asn937. 5 disulfide bridges follow: Cys979–Cys1009, Cys1002–Cys1054, Cys1019–Cys1024, Cys1055–Cys1060, and Cys1094–Cys1098. Residues 1116-1136 (MVVAVLVVLLILSILLFTLCC) traverse the membrane as a helical segment. Binding to the ribonucleoprotein regions lie at residues 1131 to 1143 (LFTL…PSYR) and 1131 to 1148 (LFTL…EHKP). The Cytoplasmic portion of the chain corresponds to 1137–1148 (PRRPSYRKEHKP).

Belongs to the hantavirus envelope glycoprotein family. In terms of assembly, homodimer. Homotetramer; forms heterotetrameric Gn-Gc spikes in the pre-fusion conformation. Interacts (via C-terminus) with the nucleoprotein. Interacts with host TUFM; this interaction contributes to the virus-induced degradation of mitochondria by autophagy, which leads to degradation of host MAVS and inhibition of type I interferon (IFN) responses. Interacts with host MAP1LC3B; this interaction contributes to the virus-induced degradation of mitochondria by autophagy, which leads to degradation of host MAVS and inhibition of type I interferon (IFN) responses. Homodimer. Homotetramer; forms heterotetrameric Gn-Gc spikes in the pre-fusion conformation. Homotrimer; forms homotrimer in the post-fusion conformation at acidic pH. Interacts (via C-terminus) with the nucleoprotein. Post-translationally, envelope polyprotein precursor is quickly cleaved in vivo just after synthesis, presumably by host signal peptidase.

The protein resides in the virion membrane. The protein localises to the host cell surface. It localises to the host Golgi apparatus membrane. Its subcellular location is the host endoplasmic reticulum membrane. It is found in the host mitochondrion. Forms homotetramers with glycoprotein C at the surface of the virion. Attaches the virion to host cell receptors including integrin ITGAV/ITGB3. This attachment induces virion internalization predominantly through clathrin-dependent endocytosis. Mediates the assembly and budding of infectious virus particles through its interaction with the nucleocapsid protein and the viral genome. May dysregulate normal immune and endothelial cell responses through an ITAM motif. Translocates to mitochondria, binds to host TUFM and recruits MAP1LC3B. These interactions induce mitochondrial autophagy and therefore destruction of host MAVS leading to inhibition of type I interferon (IFN) responses. Concomitant breakdown of glycoprotein N is apparently prevented by the nucleoprotein that may inhibit Gn-stimulated autophagosome-lysosome fusion. Interacts with the viral genomic RNA. Its function is as follows. Forms homotetramers with glycoprotein N at the surface of the virion. Attaches the virion to host cell receptors including integrin ITGAV/ITGB3. This attachment induces virion internalization predominantly through clathrin-dependent endocytosis. Class II fusion protein that promotes fusion of viral membrane with host endosomal membrane after endocytosis of the virion. This is Envelopment polyprotein (GP) from Homo sapiens (Human).